The primary structure comprises 305 residues: Peroxisome biogenesis factor 2 (305 aa).

Topologically, residues 1–15 (MAAREESTQSANRVL) are peroxisomal matrix. A helical transmembrane segment spans residues 16–42 (RISQLDALELNKALEQLVWSQFTQCFH). Topologically, residues 43–48 (GFKPGL) are cytoplasmic. A helical transmembrane segment spans residues 49–74 (LARFEPEVKAFLWLFLWRFTIYSKNA). Over 75–98 (TVGQSVLNIQYKNDSSPNPVYQPP) the chain is Peroxisomal matrix. A helical transmembrane segment spans residues 99–125 (SKNQKLLYAVCTIGGRWLEERCYDLFR). At 126–133 (NRHLASFG) the chain is on the cytoplasmic side. A helical membrane pass occupies residues 134 to 160 (KAKQCMNFVVGLLKLGELMNFLIFLQK). At 161-187 (GKFATLTERLLGIHSVFCKPQSMREVG) the chain is on the peroxisomal matrix side. A helical transmembrane segment spans residues 188 to 211 (FEYMNRELLWHGFAEFLVFLLPLI). Residues 212 to 305 (NIQKLKAKLS…GIEMSEVNAL (94 aa)) lie on the Cytoplasmic side of the membrane. Residues Cys-244, Cys-247, Cys-259, His-261, Cys-264, Cys-267, Cys-280, and Cys-283 each coordinate Zn(2+). The segment at 244-284 (CALCGEWPTMPHTIGCEHVFCYYCVKSSFLFDMYFTCPKCG) adopts an RING-type zinc-finger fold.

Belongs to the pex2/pex10/pex12 family. As to quaternary structure, component of the PEX2-PEX10-PEX12 retrotranslocation channel, composed of PEX2, PEX10 and PEX12. Post-translationally, forms intramolecular and intermolecular disulfide bonds in response to reactive oxygen species (ROS), promoting higher stability.

The protein resides in the peroxisome membrane. The enzyme catalyses [E2 ubiquitin-conjugating enzyme]-S-ubiquitinyl-L-cysteine + [acceptor protein]-L-cysteine = [E2 ubiquitin-conjugating enzyme]-L-cysteine + [acceptor protein]-S-ubiquitinyl-L-cysteine.. It catalyses the reaction S-ubiquitinyl-[E2 ubiquitin-conjugating enzyme]-L-cysteine + [acceptor protein]-L-lysine = [E2 ubiquitin-conjugating enzyme]-L-cysteine + N(6)-ubiquitinyl-[acceptor protein]-L-lysine.. Its pathway is protein modification; protein ubiquitination. Its function is as follows. E3 ubiquitin-protein ligase component of a retrotranslocation channel required for peroxisome organization by mediating export of the PEX5 receptor from peroxisomes to the cytosol, thereby promoting PEX5 recycling. The retrotranslocation channel is composed of PEX2, PEX10 and PEX12; each subunit contributing transmembrane segments that coassemble into an open channel that specifically allows the passage of PEX5 through the peroxisomal membrane. PEX2 also regulates peroxisome organization by acting as a E3 ubiquitin-protein ligase. PEX2 ubiquitinates PEX5 during its passage through the retrotranslocation channel: catalyzes monoubiquitination of PEX5 at 'Cys-11', a modification that acts as a signal for PEX5 extraction into the cytosol. Required for pexophagy in response to starvation by mediating ubiquitination of peroxisomal proteins, such as PEX5 and ABCD3/PMP70. Also involved in the response to reactive oxygen species (ROS) by mediating 'Lys-48'-linked polyubiquitination and subsequent degradation of PNPLA2/ATGL, thereby regulating lipolysis. This chain is Peroxisome biogenesis factor 2 (Pex2), found in Rattus norvegicus (Rat).